Reading from the N-terminus, the 372-residue chain is Mevalonate 3,5-bisphosphate decarboxylase (372 aa).

Belongs to the mevalonate 3,5-bisphosphate decarboxylase family. In terms of assembly, homodimer.

It catalyses the reaction (R)-3,5-bisphosphomevalonate + H(+) = isopentenyl phosphate + phosphate + CO2. Its pathway is isoprenoid biosynthesis; isopentenyl diphosphate biosynthesis via mevalonate pathway. Its function is as follows. Catalyzes the ATP-independent decarboxylation of (R)-mevalonate 3,5-bisphosphate to isopentenyl phosphate. Functions in an alternative mevalonate pathway, only present in extreme acidophiles of the Thermoplasmatales order, which passes through mevalonate 3-phosphate rather than mevalonate 5-phosphate. The sequence is that of Mevalonate 3,5-bisphosphate decarboxylase from Thermoplasma volcanium (strain ATCC 51530 / DSM 4299 / JCM 9571 / NBRC 15438 / GSS1).